The following is a 739-amino-acid chain: Alcohol dehydrogenase (quinone), dehydrogenase subunit (739 aa).

The signal sequence occupies residues 1-35 (MISAVFGKRRSLSRTLTAGTICAALISGYATMASA). Glutamate 97 contacts pyrroloquinoline quinone. Cysteine 143 and cysteine 144 form a disulfide bridge. Pyrroloquinoline quinone is bound at residue arginine 149. Ca(2+) is bound at residue glutamate 217. Threonine 279 is a binding site for pyrroloquinoline quinone. Asparagine 299 and aspartate 344 together coordinate Ca(2+). Residue aspartate 344 is the Proton acceptor of the active site. Positions 371 and 585 each coordinate pyrroloquinoline quinone. Residues 635-739 (FDSKRTDNGY…NADGIPEQLP (105 aa)) form the Cytochrome c domain. Cysteine 651, cysteine 654, histidine 655, and methionine 694 together coordinate heme c.

Belongs to the bacterial PQQ dehydrogenase family. The alcohol dehydrogenase multicomponent enzyme system is composed of a dehydrogenase subunit I (AdhA) and a cytochrome c subunit II (AdhB). Pyrroloquinoline quinone serves as cofactor. Requires Ca(2+) as cofactor. Heme c is required as a cofactor.

The protein localises to the cell membrane. It catalyses the reaction ethanol + a ubiquinone = a ubiquinol + acetaldehyde. Functionally, dehydrogenase component of the alcohol dehydrogenase multicomponent enzyme system which is involved in the production of acetic acid and in the ethanol oxidase respiratory chain. Quinohemoprotein alcohol dehydrogenase (ADH) catalyzes the oxidation of ethanol to acetaldehyde by transferring electrons to the ubiquinone embedded in the membrane phospholipids. The electrons transfer from ethanol to membranous ubiquinone occurs from pyrroloquinoline quinone (PQQ) to one heme c in subunit I (AdhA), and finally to two heme c in subunit II (AdhB). Besides ubiquinone reduction, ADH also has a ubiquinol (QH2) oxidation reaction which mediates electron transfer from ubiquinol to the non-energy generating bypass oxidase system. The electrons transfer occurs from ubiquinol (QH2) to the additional heme c within subunit II (AdhB). In Komagataeibacter europaeus (Gluconacetobacter europaeus), this protein is Alcohol dehydrogenase (quinone), dehydrogenase subunit.